A 130-amino-acid chain; its full sequence is Small ribosomal subunit protein uS8 (130 aa).

This sequence belongs to the universal ribosomal protein uS8 family. In terms of assembly, part of the 30S ribosomal subunit.

In terms of biological role, one of the primary rRNA binding proteins, it binds directly to 16S rRNA central domain where it helps coordinate assembly of the platform of the 30S subunit. This Thermococcus gammatolerans (strain DSM 15229 / JCM 11827 / EJ3) protein is Small ribosomal subunit protein uS8.